Consider the following 368-residue polypeptide: 1-deoxy-D-xylulose 5-phosphate reductoisomerase (368 aa).

Positions 7, 8, 9, 10, 31, 32, 33, and 113 each coordinate NADPH. Position 114 (Lys-114) interacts with 1-deoxy-D-xylulose 5-phosphate. Glu-115 contacts NADPH. Asp-133 contacts Mn(2+). 1-deoxy-D-xylulose 5-phosphate contacts are provided by Ser-134, Glu-135, Ser-158, and His-181. Glu-135 contributes to the Mn(2+) binding site. Gly-187 provides a ligand contact to NADPH. Positions 194, 199, 200, and 203 each coordinate 1-deoxy-D-xylulose 5-phosphate. Mn(2+) is bound at residue Glu-203.

The protein belongs to the DXR family. Mg(2+) serves as cofactor. The cofactor is Mn(2+).

The enzyme catalyses 2-C-methyl-D-erythritol 4-phosphate + NADP(+) = 1-deoxy-D-xylulose 5-phosphate + NADPH + H(+). The protein operates within isoprenoid biosynthesis; isopentenyl diphosphate biosynthesis via DXP pathway; isopentenyl diphosphate from 1-deoxy-D-xylulose 5-phosphate: step 1/6. In terms of biological role, catalyzes the NADPH-dependent rearrangement and reduction of 1-deoxy-D-xylulose-5-phosphate (DXP) to 2-C-methyl-D-erythritol 4-phosphate (MEP). This chain is 1-deoxy-D-xylulose 5-phosphate reductoisomerase, found in Helicobacter pylori (strain J99 / ATCC 700824) (Campylobacter pylori J99).